The following is a 471-amino-acid chain: Argininosuccinate lyase (471 aa).

The protein belongs to the lyase 1 family. Argininosuccinate lyase subfamily.

It localises to the cytoplasm. It carries out the reaction 2-(N(omega)-L-arginino)succinate = fumarate + L-arginine. Its pathway is amino-acid biosynthesis; L-arginine biosynthesis; L-arginine from L-ornithine and carbamoyl phosphate: step 3/3. The polypeptide is Argininosuccinate lyase (Cereibacter sphaeroides (strain ATCC 17023 / DSM 158 / JCM 6121 / CCUG 31486 / LMG 2827 / NBRC 12203 / NCIMB 8253 / ATH 2.4.1.) (Rhodobacter sphaeroides)).